We begin with the raw amino-acid sequence, 110 residues long: Flagellar hook-basal body complex protein FliE (110 aa).

This sequence belongs to the FliE family.

The protein localises to the bacterial flagellum basal body. The chain is Flagellar hook-basal body complex protein FliE from Pseudomonas putida (strain W619).